The sequence spans 841 residues: Microcephalin (841 aa).

Positions 1–93 (MAAPILKDVV…AHIDESLFPA (93 aa)) constitute a BRCT 1 domain. Ser-278, Ser-286, Ser-295, and Ser-332 each carry phosphoserine. Phosphothreonine is present on Thr-334. Disordered regions lie at residues 340–375 (GHLLIHSRPRSSSVKRKRVSYGFHSPPKEKCKRKRS), 417–445 (PDNLKERNSENLPPESQLPSSPAQFSCRS), 481–507 (SSPQKTANGEGRATLSGVTSEESSAPE), and 562–593 (VGLKSTQDKGTTSKISNSSEGEASSEHEPRSV). The span at 342-358 (LLIHSRPRSSSVKRKRV) shows a compositional bias: basic residues. Polar residues predominate over residues 433-445 (QLPSSPAQFSCRS). Polar residues predominate over residues 565-583 (KSTQDKGTTSKISNSSEGE). BRCT domains follow at residues 646 to 736 (SGKG…SFEL) and 757 to 839 (YRGT…NYLL).

In terms of assembly, interacts with CDC27 and maybe other components of the APC/C complex. Interacts with histone variant H2AX under DNA damage conditions.

The protein localises to the cytoplasm. It localises to the cytoskeleton. It is found in the microtubule organizing center. Its subcellular location is the centrosome. In terms of biological role, implicated in chromosome condensation and DNA damage induced cellular responses. May play a role in neurogenesis and regulation of the size of the cerebral cortex. The sequence is that of Microcephalin from Colobus guereza (Mantled guereza).